Here is a 428-residue protein sequence, read N- to C-terminus: C4-dicarboxylate transport protein (428 aa).

Transmembrane regions (helical) follow at residues 8–28, 44–64, 78–98, 148–168, 184–204, 222–242, 307–327, and 355–375; these read VLYVQVIFAIVVGVILGHYYP, LIKMVIGPIIFCTVVTGIAGM, LLYFEIVSTCALVLGLAATHI, GEILQILLIALLFGSVLAHLG, VLFGIVHIVTKLAPIGAFGAM, LIGTFYLTSVVFVLVVLGAIA, IYMTMAVLFIAQATNIELTWM, and AATLAVVPTIPLSGMVLILGI.

This sequence belongs to the dicarboxylate/amino acid:cation symporter (DAACS) (TC 2.A.23) family.

It localises to the cell inner membrane. Its function is as follows. Responsible for the transport of dicarboxylates such as succinate, fumarate, and malate from the periplasm across the membrane. The chain is C4-dicarboxylate transport protein from Burkholderia mallei (strain ATCC 23344).